An 862-amino-acid chain; its full sequence is Putative PIP5K1A and PSMD4-like protein (862 aa).

Residues 28–396 (TSSALKGAIQ…WFQRFMCNTV (369 aa)) form the PIPK domain. Disordered regions lie at residues 404–424 (PSPS…GSSG) and 453–481 (HLGC…PSFS). The segment covering 412 to 424 (SGSSFSQRAGSSG) has biased composition (low complexity). One can recognise a VWFA domain in the interval 490 to 673 (MLTTSVDNSE…LADALISFPI (184 aa)). A UIM 1 domain is found at 696–715 (SADPELALVLRVFMEEQRQR). The tract at residues 716–740 (QEEEARQAAAASAAEAGIATTGTED) is disordered. Positions 722–731 (QAAAASAAEA) are enriched in low complexity. The UIM 2 domain occupies 766–783 (MTEEEKIVCAMQMSLQGA). The interval 826–862 (NLPGVDPNNEAIRNAVGSLASQATKDSKKDKKEEDKK) is disordered. Basic and acidic residues predominate over residues 850–862 (KDSKKDKKEEDKK).

As to expression, testis-specific.

It is found in the cytoplasm. In terms of biological role, has negligible PIP5 kinase activity. Binds to ubiquitinated proteins. In Homo sapiens (Human), this protein is Putative PIP5K1A and PSMD4-like protein (PIPSL).